Here is a 317-residue protein sequence, read N- to C-terminus: MEYLDFELPIKELLEQLDKCQIIGTESNVDVTETCKQISQKLEDTKKDIYGNLTAWQRVQLSRHPSRPYTLEHITNLTKGTFLELFGDRNFKDDKAMIGGLGKIGDQSFMFVGQQKGINTKMRQFRNFGMPNPEGYRKALRLMKMAEKFNIPVVTLIDTPGAFPGIEAEERGQGEAIARNILEMARLKVPIICVIIGEGASGGALGIGVGDRVLMMENTWYSVISPESCSSILWKSWEYKEQAAEALKLTSADMKRQKIVDDIIPEPLGGAHYDKATAFKTVEEYILKAFNELKDLSTTDLVAQRMDKYSKMGEYNE.

A CoA carboxyltransferase C-terminal domain is found at Q37 to E292.

Belongs to the AccA family. As to quaternary structure, acetyl-CoA carboxylase is a heterohexamer composed of biotin carboxyl carrier protein (AccB), biotin carboxylase (AccC) and two subunits each of ACCase subunit alpha (AccA) and ACCase subunit beta (AccD).

The protein localises to the cytoplasm. It catalyses the reaction N(6)-carboxybiotinyl-L-lysyl-[protein] + acetyl-CoA = N(6)-biotinyl-L-lysyl-[protein] + malonyl-CoA. The protein operates within lipid metabolism; malonyl-CoA biosynthesis; malonyl-CoA from acetyl-CoA: step 1/1. In terms of biological role, component of the acetyl coenzyme A carboxylase (ACC) complex. First, biotin carboxylase catalyzes the carboxylation of biotin on its carrier protein (BCCP) and then the CO(2) group is transferred by the carboxyltransferase to acetyl-CoA to form malonyl-CoA. The polypeptide is Acetyl-coenzyme A carboxylase carboxyl transferase subunit alpha (Flavobacterium psychrophilum (strain ATCC 49511 / DSM 21280 / CIP 103535 / JIP02/86)).